The chain runs to 517 residues: Ribonuclease Y (517 aa).

Residues 1-21 traverse the membrane as a helical segment; it reads MIEVVVGIGAGLIGIGAGYLV. The region spanning 207–273 is the KH domain; it reads LINVVNIKND…TRVIELLVED (67 aa). One can recognise an HD domain in the interval 333–426; sequence ALAHSLEVAH…VCAADALSAA (94 aa).

This sequence belongs to the RNase Y family.

Its subcellular location is the cell membrane. In terms of biological role, endoribonuclease that initiates mRNA decay. The chain is Ribonuclease Y from Campylobacter fetus subsp. fetus (strain 82-40).